A 180-amino-acid chain; its full sequence is Large ribosomal subunit protein uL6 (180 aa).

This sequence belongs to the universal ribosomal protein uL6 family. As to quaternary structure, part of the 50S ribosomal subunit.

This protein binds to the 23S rRNA, and is important in its secondary structure. It is located near the subunit interface in the base of the L7/L12 stalk, and near the tRNA binding site of the peptidyltransferase center. This Borrelia hermsii (strain HS1 / DAH) protein is Large ribosomal subunit protein uL6.